Here is a 268-residue protein sequence, read N- to C-terminus: Ribosomal RNA small subunit methyltransferase A (268 aa).

S-adenosyl-L-methionine-binding residues include asparagine 11, leucine 13, glycine 37, glutamate 58, aspartate 86, and asparagine 104.

Belongs to the class I-like SAM-binding methyltransferase superfamily. rRNA adenine N(6)-methyltransferase family. RsmA subfamily.

Its subcellular location is the cytoplasm. It catalyses the reaction adenosine(1518)/adenosine(1519) in 16S rRNA + 4 S-adenosyl-L-methionine = N(6)-dimethyladenosine(1518)/N(6)-dimethyladenosine(1519) in 16S rRNA + 4 S-adenosyl-L-homocysteine + 4 H(+). Specifically dimethylates two adjacent adenosines (A1518 and A1519) in the loop of a conserved hairpin near the 3'-end of 16S rRNA in the 30S particle. May play a critical role in biogenesis of 30S subunits. This chain is Ribosomal RNA small subunit methyltransferase A, found in Campylobacter fetus subsp. fetus (strain 82-40).